Reading from the N-terminus, the 643-residue chain is Transcription elongation factor B polypeptide 3 (643 aa).

The region spanning Asp-9–Glu-82 is the TFIIS N-terminal domain. Disordered regions lie at residues Ile-86 to Asn-289 and Ser-302 to Pro-351. Residues His-94–Asp-106 are compositionally biased toward basic and acidic residues. Residues Lys-114–Leu-124 show a composition bias toward polar residues. Ser-120 carries the phosphoserine modification. Basic residues predominate over residues Ser-127–Ser-136. Basic and acidic residues-rich tracts occupy residues His-164 to Ser-198 and Ser-207 to Lys-237. Basic residues predominate over residues Ser-238–Pro-255. A compositionally biased stretch (low complexity) spans Ser-302 to Ser-336. The segment at Ala-413–Glu-571 is activation domain. Positions Ser-439–Leu-448 are interacting with Elongin BC complex.

It is found in the nucleus. SIII, also known as elongin, is a general transcription elongation factor that increases the RNA polymerase II transcription elongation past template-encoded arresting sites. Subunit A is transcriptionally active and its transcription activity is strongly enhanced by binding to the dimeric complex of the SIII regulatory subunits B and C (elongin BC complex). May play an important role in metamorphosis. This Drosophila melanogaster (Fruit fly) protein is Transcription elongation factor B polypeptide 3 (EloA).